Consider the following 362-residue polypeptide: Talin rod domain-containing protein 1 (362 aa).

The tract at residues 1–26 (MASGSAGKPTGEAASPAPASAIGGAS) is disordered. An N-acetylalanine modification is found at Ala2. Positions 13–26 (AASPAPASAIGGAS) are enriched in low complexity.

As to quaternary structure, may homodimerize. Interacts with F-actin.

Functionally, actin-binding protein which may have an oncogenic function and regulates cell proliferation, migration and invasion in cancer cells. The polypeptide is Talin rod domain-containing protein 1 (Homo sapiens (Human)).